The sequence spans 126 residues: Large-conductance mechanosensitive channel (126 aa).

2 helical membrane passes run 14 to 34 (VIDLAVGVVIGTAFSAVVNSL) and 66 to 86 (FITTIVNFLIISAALYFLVVV).

This sequence belongs to the MscL family. As to quaternary structure, homopentamer.

Its subcellular location is the cell membrane. Functionally, channel that opens in response to stretch forces in the membrane lipid bilayer. May participate in the regulation of osmotic pressure changes within the cell. The chain is Large-conductance mechanosensitive channel from Roseiflexus sp. (strain RS-1).